We begin with the raw amino-acid sequence, 84 residues long: Small ribosomal subunit protein uS17 (84 aa).

Belongs to the universal ribosomal protein uS17 family. Part of the 30S ribosomal subunit.

One of the primary rRNA binding proteins, it binds specifically to the 5'-end of 16S ribosomal RNA. The chain is Small ribosomal subunit protein uS17 from Aliivibrio fischeri (strain ATCC 700601 / ES114) (Vibrio fischeri).